A 288-amino-acid chain; its full sequence is L-xylulose reductase (288 aa).

NADP(+)-binding residues include Ile-39, Asn-113, and Lys-147. Ser-181 acts as the Proton donor in catalysis. 4 residues coordinate NADP(+): Tyr-196, Lys-200, Ile-228, and Thr-230. Tyr-196 (proton acceptor) is an active-site residue. The active-site Lowers pKa of active site Tyr is the Lys-200.

It belongs to the short-chain dehydrogenases/reductases (SDR) family.

The catalysed reaction is xylitol + NADP(+) = L-xylulose + NADPH + H(+). Its pathway is carbohydrate degradation; L-arabinose degradation via L-arabinitol; D-xylulose 5-phosphate from L-arabinose (fungal route): step 3/5. L-xylulose reductase involved in the catabolism of L-arabinose through an oxidoreductive pathway. Catalyzes the NADPH-dependent reduction of L-xylulose. Is also able to convert D-xylulose, D-ribulose, L-sorbose, and D-fructose to their corresponding polyols. The protein is L-xylulose reductase of Hypocrea jecorina (strain QM6a) (Trichoderma reesei).